The sequence spans 459 residues: Hemopexin (459 aa).

A signal peptide spans 1-23 (MARALRVPVALWLLGLCWSLAKA). Intrachain disulfides connect Cys52–Cys232, Cys150–Cys155, and Cys189–Cys201. Hemopexin repeat units lie at residues 55–95 (GWGF…WKDA), 96–140 (PSPV…FPGI), 141–185 (PFPL…SWPA), and 186–232 (VGNC…FMSC). Heme is bound at residue His81. A heme-binding site is contributed by His151. The N-linked (GlcNAc...) asparagine glycan is linked to Asn188. Residue Asn218 is glycosylated (N-linked (GlcNAc...) asparagine). A heme-binding site is contributed by His237. An N-linked (GlcNAc...) asparagine glycan is attached at Asn241. Intrachain disulfides connect Cys250–Cys453, Cys359–Cys401, and Cys411–Cys428. Hemopexin repeat units follow at residues 252-297 (PHLV…WPQG), 298-345 (PSTV…FGSP), 350-389 (LHSV…WTEL), and 393-444 (HTKV…LPQA). His286 serves as a coordination point for heme.

This sequence belongs to the hemopexin family.

It is found in the secreted. Functionally, binds heme and transports it to the liver for breakdown and iron recovery, after which the free hemopexin returns to the circulation. This is Hemopexin (HPX) from Bos taurus (Bovine).